The chain runs to 158 residues: NAD(P)H-quinone oxidoreductase subunit J, chloroplastic (158 aa).

Belongs to the complex I 30 kDa subunit family. NDH is composed of at least 16 different subunits, 5 of which are encoded in the nucleus.

The protein localises to the plastid. The protein resides in the chloroplast thylakoid membrane. It carries out the reaction a plastoquinone + NADH + (n+1) H(+)(in) = a plastoquinol + NAD(+) + n H(+)(out). The enzyme catalyses a plastoquinone + NADPH + (n+1) H(+)(in) = a plastoquinol + NADP(+) + n H(+)(out). NDH shuttles electrons from NAD(P)H:plastoquinone, via FMN and iron-sulfur (Fe-S) centers, to quinones in the photosynthetic chain and possibly in a chloroplast respiratory chain. The immediate electron acceptor for the enzyme in this species is believed to be plastoquinone. Couples the redox reaction to proton translocation, and thus conserves the redox energy in a proton gradient. The chain is NAD(P)H-quinone oxidoreductase subunit J, chloroplastic from Solanum bulbocastanum (Wild potato).